Here is a 297-residue protein sequence, read N- to C-terminus: MKELGRLITAMVTPFKKDGTVDYAQAQKLALGLLDSGSDGLVVVGTTGESPTVTWEEEHALFAAVKSAVGNRGKVIAGTGANSTQEALENTLKAEKIGVDACLLVVPYYNKPTQEGLYLHFKTIAEATKLPCILYNVPSRTITHMSPETVIRLSQIPNIVGVKEASGKLDDIAQIINNVRPDFTVWSGNDSDTLPMLAMGAYGVISVASHIVGKQIKEMITSFVSGNTDNAAAIHRHLTPLIRSLFVVSNPIPIKYALNYLGFEVGGLRLPMTEADEKTAALIRESLKGYTIDLPIK.

Residue T47 participates in pyruvate binding. Residue Y135 is the Proton donor/acceptor of the active site. K163 serves as the catalytic Schiff-base intermediate with substrate. Residue I205 coordinates pyruvate.

The protein belongs to the DapA family. In terms of assembly, homotetramer; dimer of dimers.

The protein resides in the cytoplasm. The catalysed reaction is L-aspartate 4-semialdehyde + pyruvate = (2S,4S)-4-hydroxy-2,3,4,5-tetrahydrodipicolinate + H2O + H(+). Its pathway is amino-acid biosynthesis; L-lysine biosynthesis via DAP pathway; (S)-tetrahydrodipicolinate from L-aspartate: step 3/4. Functionally, catalyzes the condensation of (S)-aspartate-beta-semialdehyde [(S)-ASA] and pyruvate to 4-hydroxy-tetrahydrodipicolinate (HTPA). The protein is 4-hydroxy-tetrahydrodipicolinate synthase of Dehalococcoides mccartyi (strain ATCC BAA-2266 / KCTC 15142 / 195) (Dehalococcoides ethenogenes (strain 195)).